A 506-amino-acid polypeptide reads, in one-letter code: Maturase K (506 aa).

It belongs to the intron maturase 2 family. MatK subfamily.

Its subcellular location is the plastid. It is found in the chloroplast. Its function is as follows. Usually encoded in the trnK tRNA gene intron. Probably assists in splicing its own and other chloroplast group II introns. This is Maturase K from Prunus dulcis (Almond).